The following is a 71-amino-acid chain: BBSome-interacting protein 1 (71 aa).

It belongs to the BBIP10 family.

It is found in the cell projection. The protein localises to the cilium. It localises to the cytoplasm. Functionally, required for primary cilia assembly. This Nematostella vectensis (Starlet sea anemone) protein is BBSome-interacting protein 1 (bbip1).